The sequence spans 453 residues: Bifunctional protein GlmU (453 aa).

Residues 1–227 are pyrophosphorylase; that stretch reads MTQDIVILAA…EAEVAGVNDR (227 aa). UDP-N-acetyl-alpha-D-glucosamine is bound by residues 8 to 11, lysine 22, glutamine 73, 78 to 79, 100 to 102, glycine 137, glutamate 152, asparagine 167, and asparagine 225; these read LAAG, GT, and YGD. Mg(2+) is bound at residue aspartate 102. Asparagine 225 serves as a coordination point for Mg(2+). The tract at residues 228–248 is linker; it reads VQLAALERELQNQQAVSLMQN. The tract at residues 249–453 is N-acetyltransferase; that stretch reads GATLLDPSRI…KDNWPRPIKK (205 aa). 2 residues coordinate UDP-N-acetyl-alpha-D-glucosamine: arginine 331 and lysine 349. Histidine 361 serves as the catalytic Proton acceptor. UDP-N-acetyl-alpha-D-glucosamine is bound by residues tyrosine 364 and asparagine 375. Residues alanine 378, 384-385, serine 403, alanine 421, and arginine 438 contribute to the acetyl-CoA site; that span reads NY.

In the N-terminal section; belongs to the N-acetylglucosamine-1-phosphate uridyltransferase family. It in the C-terminal section; belongs to the transferase hexapeptide repeat family. As to quaternary structure, homotrimer. It depends on Mg(2+) as a cofactor.

It is found in the cytoplasm. The catalysed reaction is alpha-D-glucosamine 1-phosphate + acetyl-CoA = N-acetyl-alpha-D-glucosamine 1-phosphate + CoA + H(+). It carries out the reaction N-acetyl-alpha-D-glucosamine 1-phosphate + UTP + H(+) = UDP-N-acetyl-alpha-D-glucosamine + diphosphate. The protein operates within nucleotide-sugar biosynthesis; UDP-N-acetyl-alpha-D-glucosamine biosynthesis; N-acetyl-alpha-D-glucosamine 1-phosphate from alpha-D-glucosamine 6-phosphate (route II): step 2/2. It participates in nucleotide-sugar biosynthesis; UDP-N-acetyl-alpha-D-glucosamine biosynthesis; UDP-N-acetyl-alpha-D-glucosamine from N-acetyl-alpha-D-glucosamine 1-phosphate: step 1/1. It functions in the pathway bacterial outer membrane biogenesis; LPS lipid A biosynthesis. Catalyzes the last two sequential reactions in the de novo biosynthetic pathway for UDP-N-acetylglucosamine (UDP-GlcNAc). The C-terminal domain catalyzes the transfer of acetyl group from acetyl coenzyme A to glucosamine-1-phosphate (GlcN-1-P) to produce N-acetylglucosamine-1-phosphate (GlcNAc-1-P), which is converted into UDP-GlcNAc by the transfer of uridine 5-monophosphate (from uridine 5-triphosphate), a reaction catalyzed by the N-terminal domain. The chain is Bifunctional protein GlmU from Marinomonas sp. (strain MWYL1).